Reading from the N-terminus, the 739-residue chain is Malate synthase G (739 aa).

Residues 1–18 (MTEQELLSAQTADNAGTD) show a composition bias toward polar residues. Positions 1 to 23 (MTEQELLSAQTADNAGTDSTERV) are disordered. Residues Val135, 142 to 143 (RF), Ser292, and Arg329 contribute to the acetyl-CoA site. Arg356 acts as the Proton acceptor in catalysis. Glyoxylate-binding positions include Arg356, Glu447, and 472 to 475 (GFLD). Residues Glu447 and Asp475 each contribute to the Mg(2+) site. Acetyl-CoA is bound at residue Pro556. Cys633 carries the post-translational modification Cysteine sulfenic acid (-SOH). Asp647 acts as the Proton donor in catalysis.

This sequence belongs to the malate synthase family. GlcB subfamily. As to quaternary structure, monomer. Requires Mg(2+) as cofactor.

The protein localises to the cytoplasm. It carries out the reaction glyoxylate + acetyl-CoA + H2O = (S)-malate + CoA + H(+). Its pathway is carbohydrate metabolism; glyoxylate cycle; (S)-malate from isocitrate: step 2/2. Inhibited by oxalate, glycolate and ATP. In terms of biological role, involved in the glycolate utilization. Catalyzes the condensation and subsequent hydrolysis of acetyl-coenzyme A (acetyl-CoA) and glyoxylate to form malate and CoA. The polypeptide is Malate synthase G (Corynebacterium glutamicum (strain ATCC 13032 / DSM 20300 / JCM 1318 / BCRC 11384 / CCUG 27702 / LMG 3730 / NBRC 12168 / NCIMB 10025 / NRRL B-2784 / 534)).